The following is a 912-amino-acid chain: MAIRLNKVTKLLNVGLSTIVKFLQSRGYLREENPNTKISPEEYEILNQEFHKDKHVKLDSEKLSKERFQKENYDKDKLKQIEEIKMGIPRSNEFQLLLTSKLDLDTLPQDKSQTTIEIKKTIKTSEIKEIKRENKTDILKERKQIEEIKNSYLNKQQKKSNLLSSTDSTINFTITGKIDLTTINNATRPKRKTKEEKQKEREERNKKIVNIKTEKTTQVNAGKKSIASTQTNIEILKRKKRNRIKHEKVNIEQQNISTIPNPKNKHFKFHKPTYKNEVSEEDVQKQIKETLAKLTNSSLKKGTKYRKEKRDTLLQLKNEQYKIKTQENKTIKITEFVTANDLSKMMNVPVVQVISTCMSIGIMVSINQRLDSETIDIVADEFGYKTEYVSAEAIETIIDDENENQEKELVLRPPIVTIMGHVDHGKTSLLDNIRNTNVIAGEAGGITQHIGAYNVKLDDGRKITFLDTPGHEAFTAMRARGAKITDIAIIIIASDDNIMPQTIEAINHAVAAGVPIIFAINKIDKHGANPEKIKETLASMNYLVEDWGGKYQSQDISAKKGIGIQELLEKVLLEAELLDLKANPKRYAIGSIIESSLDKGRGYIATMLIQNGTLKLGDIVLAGIYFGRVKAMFNERNLKIKEAGPSQAVLVLGLNGAPQAGDTIRVVKTEQEAREIAAKREQLQREQSLRTQKLLTLDDISRRIAVKNFHKLNIIVKGDVDGSVEALSDSLIRLSTEQIQINVIHKGVGQISESDVILATASNAFIIGFQVRPSLLTRKLAEKEGVEIRLYSIIYNAIEEVKSAMEGMLIPKTKEEITSNVEIREVYKITKVGSVAGCIVKEGKIKQGDKIRLIRNGVVIYTGELGSLKRYKDYAKEVTQGCECGLNIHNFNDIKVGDIIETFENIETKQKL.

Positions 185 to 204 (NATRPKRKTKEEKQKEREER) are disordered. A compositionally biased stretch (basic and acidic residues) spans 193-204 (TKEEKQKEREER). A tr-type G domain is found at 411–581 (LRPPIVTIMG…LLEAELLDLK (171 aa)). A G1 region spans residues 420 to 427 (GHVDHGKT). 420-427 (GHVDHGKT) is a GTP binding site. Residues 445–449 (GITQH) form a G2 region. The segment at 467 to 470 (DTPG) is G3. GTP is bound by residues 467–471 (DTPGH) and 521–524 (NKID). The interval 521–524 (NKID) is G4. Residues 557 to 559 (SAK) are G5.

It belongs to the TRAFAC class translation factor GTPase superfamily. Classic translation factor GTPase family. IF-2 subfamily.

Its subcellular location is the cytoplasm. One of the essential components for the initiation of protein synthesis. Protects formylmethionyl-tRNA from spontaneous hydrolysis and promotes its binding to the 30S ribosomal subunits. Also involved in the hydrolysis of GTP during the formation of the 70S ribosomal complex. The chain is Translation initiation factor IF-2 from Azobacteroides pseudotrichonymphae genomovar. CFP2.